The primary structure comprises 186 residues: MGRYSRESDNVAKSCKARGPNLRVHFKNTHETAQAIKRMPLRRAQRYLKAVIDQKECVPFRRFNGGVGRCAQAKQWKTTQGRWPKKSAEFLLQLLRNAEANADCKGLDADRLVVHHIQVNRAQCLRRRTYRAHGRINPYMSSPCHVEVILTEKEEVVSKATDDEPTKKKLSKKKLQRQKEKMLRSE.

Basic and acidic residues-rich tracts occupy residues 157-167 (VSKATDDEPTK) and 177-186 (RQKEKMLRSE). The segment at 157 to 186 (VSKATDDEPTKKKLSKKKLQRQKEKMLRSE) is disordered.

The protein belongs to the universal ribosomal protein uL22 family.

The protein is Large ribosomal subunit protein uL22 (RpL17) of Drosophila yakuba (Fruit fly).